The sequence spans 500 residues: Pentatricopeptide repeat-containing protein At1g05750, chloroplastic (500 aa).

Residues 1 to 54 (MGLLPVVGITSPALITHKNHANPKIQRHNQSTSETTVSWTSRINLLTRNGRLAE) constitute a chloroplast transit peptide. 10 PPR repeats span residues 35-69 (TTVS…GVEP), 70-106 (NHIT…GLDR), 108-138 (HVMV…MEDK), 139-173 (NSVT…DLIS), 174-204 (WTAM…GVKP), 205-239 (DYVA…DFKN), 240-270 (NVRV…MEKR), 271-305 (TVVS…GFKP), 306-336 (DAVT…MKCD), and 342-376 (RIEH…PNEV). Residues 377 to 453 (VIGSLLAACS…QPGFSSIEID (77 aa)) are type E motif. The type E(+) motif stretch occupies residues 454 to 484 (DCMHVFMAGDNAHVETTYIREVLELISSDLR).

It belongs to the PPR family. PCMP-E subfamily.

The protein localises to the plastid. The protein resides in the chloroplast. In Arabidopsis thaliana (Mouse-ear cress), this protein is Pentatricopeptide repeat-containing protein At1g05750, chloroplastic (PDE247).